The chain runs to 186 residues: Casparian strip membrane protein 5 (186 aa).

Topologically, residues 1–25 (MKTDAIELGVAKDSTPIGGANRGVS) are cytoplasmic. A helical transmembrane segment spans residues 26–46 (ILDFILRLVALVGTLASAILM). The Extracellular portion of the chain corresponds to 47–73 (GTTNETLPFATQFIRFRAEYDDLPTFT). Asparagine 50 is a glycosylation site (N-linked (GlcNAc...) asparagine). Residues 74 to 94 (FFVVANIVVSGYLLLSLPLSI) traverse the membrane as a helical segment. Residues 95–106 (VNIVRSTAKNRR) are Cytoplasmic-facing. A helical membrane pass occupies residues 107 to 127 (IILIIFDTAMLALLTAGASAA). At 128–156 (AAIVYLAHKGNTRANWFAICQQFNSFCER) the chain is on the extracellular side. The helical transmembrane segment at 157–177 (ISGSLIGSFVGVAVFILLILM) threads the bilayer. Residues 178-186 (SASALSRRN) are Cytoplasmic-facing.

It belongs to the Casparian strip membrane proteins (CASP) family. In terms of assembly, homodimer and heterodimers.

It is found in the cell membrane. Functionally, regulates membrane-cell wall junctions and localized cell wall deposition. Required for establishment of the Casparian strip membrane domain (CSD) and the subsequent formation of Casparian strips, a cell wall modification of the root endodermis that determines an apoplastic barrier between the intraorganismal apoplasm and the extraorganismal apoplasm and prevents lateral diffusion. The polypeptide is Casparian strip membrane protein 5 (Ricinus communis (Castor bean)).